A 653-amino-acid polypeptide reads, in one-letter code: tRNA uridine 5-carboxymethylaminomethyl modification enzyme MnmG (653 aa).

Residues 18 to 23, valine 130, and threonine 195 each bind FAD; that span reads GAGHAG. 287–301 provides a ligand contact to NAD(+); it reads GPRYCPSIEDKVVRF. An FAD-binding site is contributed by glutamine 384. The tract at residues 624–653 is disordered; sequence SQTKSSASVDKRASSDNESSRPTSSASDSL. Residues 632-642 show a composition bias toward basic and acidic residues; that stretch reads VDKRASSDNES. Over residues 643 to 653 the composition is skewed to polar residues; the sequence is SRPTSSASDSL.

It belongs to the MnmG family. In terms of assembly, homodimer. Heterotetramer of two MnmE and two MnmG subunits. Requires FAD as cofactor.

It is found in the cytoplasm. NAD-binding protein involved in the addition of a carboxymethylaminomethyl (cmnm) group at the wobble position (U34) of certain tRNAs, forming tRNA-cmnm(5)s(2)U34. This Rhodopirellula baltica (strain DSM 10527 / NCIMB 13988 / SH1) protein is tRNA uridine 5-carboxymethylaminomethyl modification enzyme MnmG.